Here is a 329-residue protein sequence, read N- to C-terminus: MGKLIDIPIVVESGQKYKTSQGVTAIKDGIKSSGQDHERLPKPKWLRIVNHTTPAYSQVKEQVQKHRLATVCEEAKCPNISECWSHGTATIMLMGAVCTRACRFCSVDTGNPHGWLDAEEPENTAETVALMNLDYVVLTSVNRDDLPDGGANHYAKTIRAIKKRSPRTKVEALTPDFQGSERDVAVLLDSGVDVFAQNVETVERLTHPVRDNRAGYQQTLNVLAFAKKYRPDVLTKTSLMLGLGETDEEIIQTMDDLRTHHVDILTLGQYLQPTKNHLPIARYVTPETFSELRQIGLKKGFFEVASGPLVRSSYRADRVFKRDNLGLDV.

[4Fe-4S] cluster is bound by residues C72, C77, C83, C98, C102, C105, and S313. Positions 83–303 constitute a Radical SAM core domain; that stretch reads CWSHGTATIM…QIGLKKGFFE (221 aa).

Belongs to the radical SAM superfamily. Lipoyl synthase family. Requires [4Fe-4S] cluster as cofactor.

It localises to the cytoplasm. The enzyme catalyses [[Fe-S] cluster scaffold protein carrying a second [4Fe-4S](2+) cluster] + N(6)-octanoyl-L-lysyl-[protein] + 2 oxidized [2Fe-2S]-[ferredoxin] + 2 S-adenosyl-L-methionine + 4 H(+) = [[Fe-S] cluster scaffold protein] + N(6)-[(R)-dihydrolipoyl]-L-lysyl-[protein] + 4 Fe(3+) + 2 hydrogen sulfide + 2 5'-deoxyadenosine + 2 L-methionine + 2 reduced [2Fe-2S]-[ferredoxin]. The protein operates within protein modification; protein lipoylation via endogenous pathway; protein N(6)-(lipoyl)lysine from octanoyl-[acyl-carrier-protein]: step 2/2. Its function is as follows. Catalyzes the radical-mediated insertion of two sulfur atoms into the C-6 and C-8 positions of the octanoyl moiety bound to the lipoyl domains of lipoate-dependent enzymes, thereby converting the octanoylated domains into lipoylated derivatives. This is Lipoyl synthase from Legionella pneumophila (strain Paris).